Consider the following 71-residue polypeptide: uncharacterized protein (71 aa).

Residues 1–21 form the signal peptide; the sequence is MGVGLHGDHVGGELNSANAFT.

This is an uncharacterized protein from Haemophilus influenzae (strain ATCC 51907 / DSM 11121 / KW20 / Rd).